Reading from the N-terminus, the 267-residue chain is Octanoyltransferase (267 aa).

A BPL/LPL catalytic domain is found at 77–265 (GTASELVWLV…AFESVFGPRQ (189 aa)). Residues 116 to 123 (RGGEYTYH), 196 to 198 (AIG), and 209 to 211 (GIA) contribute to the substrate site. The active-site Acyl-thioester intermediate is the Cys-227.

It belongs to the LipB family.

Its subcellular location is the cytoplasm. The enzyme catalyses octanoyl-[ACP] + L-lysyl-[protein] = N(6)-octanoyl-L-lysyl-[protein] + holo-[ACP] + H(+). It participates in protein modification; protein lipoylation via endogenous pathway; protein N(6)-(lipoyl)lysine from octanoyl-[acyl-carrier-protein]: step 1/2. Catalyzes the transfer of endogenously produced octanoic acid from octanoyl-acyl-carrier-protein onto the lipoyl domains of lipoate-dependent enzymes. Lipoyl-ACP can also act as a substrate although octanoyl-ACP is likely to be the physiological substrate. The sequence is that of Octanoyltransferase from Brucella suis biovar 1 (strain 1330).